The following is a 267-amino-acid chain: Tryptophan synthase alpha chain (267 aa).

Residues Glu-49 and Asp-60 each act as proton acceptor in the active site.

This sequence belongs to the TrpA family. As to quaternary structure, tetramer of two alpha and two beta chains.

It catalyses the reaction (1S,2R)-1-C-(indol-3-yl)glycerol 3-phosphate + L-serine = D-glyceraldehyde 3-phosphate + L-tryptophan + H2O. The protein operates within amino-acid biosynthesis; L-tryptophan biosynthesis; L-tryptophan from chorismate: step 5/5. Functionally, the alpha subunit is responsible for the aldol cleavage of indoleglycerol phosphate to indole and glyceraldehyde 3-phosphate. This Salinispora tropica (strain ATCC BAA-916 / DSM 44818 / JCM 13857 / NBRC 105044 / CNB-440) protein is Tryptophan synthase alpha chain.